Here is a 539-residue protein sequence, read N- to C-terminus: GMP synthase [glutamine-hydrolyzing] (539 aa).

A Glutamine amidotransferase type-1 domain is found at 4-202 (KILILDFGSQ…VLQIAGCKPD (199 aa)). Residue cysteine 81 is the Nucleophile of the active site. Active-site residues include histidine 176 and glutamate 178. The GMPS ATP-PPase domain occupies 203 to 395 (WVMRDHIEEA…LGLPPEMVYR (193 aa)). ATP is bound at residue 230–236 (SGGVDSS).

As to quaternary structure, homodimer.

The catalysed reaction is XMP + L-glutamine + ATP + H2O = GMP + L-glutamate + AMP + diphosphate + 2 H(+). The protein operates within purine metabolism; GMP biosynthesis; GMP from XMP (L-Gln route): step 1/1. Functionally, catalyzes the synthesis of GMP from XMP. The sequence is that of GMP synthase [glutamine-hydrolyzing] from Cupriavidus taiwanensis (strain DSM 17343 / BCRC 17206 / CCUG 44338 / CIP 107171 / LMG 19424 / R1) (Ralstonia taiwanensis (strain LMG 19424)).